The primary structure comprises 334 residues: Probable fructose-bisphosphate aldolase class 1 (334 aa).

It belongs to the class I fructose-bisphosphate aldolase family.

The enzyme catalyses beta-D-fructose 1,6-bisphosphate = D-glyceraldehyde 3-phosphate + dihydroxyacetone phosphate. It participates in carbohydrate degradation; glycolysis; D-glyceraldehyde 3-phosphate and glycerone phosphate from D-glucose: step 4/4. The protein is Probable fructose-bisphosphate aldolase class 1 of Xylella fastidiosa (strain Temecula1 / ATCC 700964).